Here is a 1358-residue protein sequence, read N- to C-terminus: DNA mismatch repair protein Msh6 (1358 aa).

The disordered stretch occupies residues 1 to 87 (MSRQSTLYSF…SSAQAVPPSS (87 aa)). Residues serine 14, serine 38, and serine 40 each carry the phosphoserine modification. Over residues 25-46 (AEASRQGAAASGASASRGGDAA) the composition is skewed to low complexity. At lysine 67 the chain carries N6-acetyllysine. A compositionally biased stretch (low complexity) spans 76 to 87 (ASSSAQAVPPSS). Phosphoserine is present on residues serine 91, serine 137, serine 200, serine 219, and serine 227. A PWWP domain is found at 92 to 154 (PGDLVWAKME…KRMLKPYTGS (63 aa)). Positions 197–360 (DEPSEPEEEE…VSGGGNDSSG (164 aa)) are disordered. Composition is skewed to acidic residues over residues 198-209 (EPSEPEEEEETE) and 219-231 (SEEDNYNESEEEA). Residues 240-249 (RSSRQVKKRR) show a composition bias toward basic residues. Serine 252, serine 254, serine 256, and serine 261 each carry phosphoserine. The span at 263-273 (VEFKPDTKQEG) shows a compositional bias: basic and acidic residues. Phosphothreonine is present on threonine 269. Serine 274, serine 275, serine 279, and serine 280 each carry phosphoserine. Residues 329 to 351 (LSETKSTLSAFSAPQNSESQTHV) show a composition bias toward polar residues. Threonine 487 carries the phosphothreonine modification. Position 503 is an N6-acetyllysine (lysine 503). Phosphoserine occurs at positions 827 and 932. A Phosphothreonine modification is found at threonine 1007. Residue 1132–1139 (GPNMGGKS) coordinates ATP.

It belongs to the DNA mismatch repair MutS family. In terms of assembly, component of the DNA mismatch repair (MMR) complex composed at least of MSH2, MSH3, MSH6, PMS1 and MLH1. Heterodimer consisting of MSH2-MSH6 (MutS alpha). Forms a ternary complex with MutL alpha (MLH1-PMS1). Interacts with MCM9. Part of the BRCA1-associated genome surveillance complex (BASC), which contains BRCA1, MSH2, MSH6, MLH1, ATM, BLM, PMS2 and the RAD50-MRE11-NBS1 protein complex. This association could be a dynamic process changing throughout the cell cycle and within subnuclear domains. Post-translationally, phosphorylated by PRKCZ, which may prevent MutS alpha degradation by the ubiquitin-proteasome pathway.

It localises to the nucleus. It is found in the chromosome. Its function is as follows. Component of the post-replicative DNA mismatch repair system (MMR). Heterodimerizes with MSH2 to form MutS alpha, which binds to DNA mismatches thereby initiating DNA repair. When bound, MutS alpha bends the DNA helix and shields approximately 20 base pairs, and recognizes single base mismatches and dinucleotide insertion-deletion loops (IDL) in the DNA. After mismatch binding, forms a ternary complex with the MutL alpha heterodimer, which is thought to be responsible for directing the downstream MMR events, including strand discrimination, excision, and resynthesis. ATP binding and hydrolysis play a pivotal role in mismatch repair functions. The ATPase activity associated with MutS alpha regulates binding similar to a molecular switch: mismatched DNA provokes ADP--&gt;ATP exchange, resulting in a discernible conformational transition that converts MutS alpha into a sliding clamp capable of hydrolysis-independent diffusion along the DNA backbone. This transition is crucial for mismatch repair. MutS alpha may also play a role in DNA homologous recombination repair. Recruited on chromatin in G1 and early S phase via its PWWP domain that specifically binds trimethylated 'Lys-36' of histone H3 (H3K36me3): early recruitment to chromatin to be replicated allowing a quick identification of mismatch repair to initiate the DNA mismatch repair reaction. The chain is DNA mismatch repair protein Msh6 from Mus musculus (Mouse).